The following is a 97-amino-acid chain: Large ribosomal subunit protein bL28 (97 aa).

This sequence belongs to the bacterial ribosomal protein bL28 family.

The sequence is that of Large ribosomal subunit protein bL28 from Rickettsia africae (strain ESF-5).